A 260-amino-acid chain; its full sequence is Putative serine protease 45 (260 aa).

Positions 1 to 234 constitute a Peptidase S1 domain; sequence MTRHWPWEVS…YTKWIKKQMS (234 aa). Cys-19 and Cys-35 form a disulfide bridge. The Charge relay system role is filled by His-34. A glycan (N-linked (GlcNAc...) asparagine) is linked at Asn-55. Residue Asp-82 is the Charge relay system of the active site. 3 disulfide bridges follow: Cys-116/Cys-192, Cys-151/Cys-173, and Cys-182/Cys-210. Ser-186 acts as the Charge relay system in catalysis.

The protein belongs to the peptidase S1 family.

This chain is Putative serine protease 45, found in Homo sapiens (Human).